A 360-amino-acid polypeptide reads, in one-letter code: Phospho-N-acetylmuramoyl-pentapeptide-transferase (360 aa).

A run of 10 helical transmembrane segments spans residues 25-45, 73-93, 94-114, 134-154, 173-193, 198-218, 240-260, 262-282, 287-307, and 337-357; these read RTIY…PWLI, TMGG…WADL, TNAY…IGFV, FCLQ…GLNG, PGYV…VNLT, GLAI…AYVA, VFCG…AYPA, IFMG…VAIL, LALV…ILQV, and KVIV…VSTL.

It belongs to the glycosyltransferase 4 family. MraY subfamily. Mg(2+) serves as cofactor.

Its subcellular location is the cell inner membrane. It catalyses the reaction UDP-N-acetyl-alpha-D-muramoyl-L-alanyl-gamma-D-glutamyl-meso-2,6-diaminopimeloyl-D-alanyl-D-alanine + di-trans,octa-cis-undecaprenyl phosphate = di-trans,octa-cis-undecaprenyl diphospho-N-acetyl-alpha-D-muramoyl-L-alanyl-D-glutamyl-meso-2,6-diaminopimeloyl-D-alanyl-D-alanine + UMP. The protein operates within cell wall biogenesis; peptidoglycan biosynthesis. Catalyzes the initial step of the lipid cycle reactions in the biosynthesis of the cell wall peptidoglycan: transfers peptidoglycan precursor phospho-MurNAc-pentapeptide from UDP-MurNAc-pentapeptide onto the lipid carrier undecaprenyl phosphate, yielding undecaprenyl-pyrophosphoryl-MurNAc-pentapeptide, known as lipid I. The chain is Phospho-N-acetylmuramoyl-pentapeptide-transferase from Desulfatibacillum aliphaticivorans.